Here is a 196-residue protein sequence, read N- to C-terminus: ATP-dependent Clp protease proteolytic subunit (196 aa).

Ser96 acts as the Nucleophile in catalysis. The active site involves His121.

This sequence belongs to the peptidase S14 family. As to quaternary structure, fourteen ClpP subunits assemble into 2 heptameric rings which stack back to back to give a disk-like structure with a central cavity, resembling the structure of eukaryotic proteasomes.

The protein localises to the cytoplasm. The enzyme catalyses Hydrolysis of proteins to small peptides in the presence of ATP and magnesium. alpha-casein is the usual test substrate. In the absence of ATP, only oligopeptides shorter than five residues are hydrolyzed (such as succinyl-Leu-Tyr-|-NHMec, and Leu-Tyr-Leu-|-Tyr-Trp, in which cleavage of the -Tyr-|-Leu- and -Tyr-|-Trp bonds also occurs).. Functionally, cleaves peptides in various proteins in a process that requires ATP hydrolysis. Has a chymotrypsin-like activity. Plays a major role in the degradation of misfolded proteins. The polypeptide is ATP-dependent Clp protease proteolytic subunit (Streptococcus uberis (strain ATCC BAA-854 / 0140J)).